Reading from the N-terminus, the 156-residue chain is Ribosomal RNA large subunit methyltransferase H (156 aa).

S-adenosyl-L-methionine is bound by residues Leu73, Gly104, and 123-128 (LSPLTL).

This sequence belongs to the RNA methyltransferase RlmH family. As to quaternary structure, homodimer.

It is found in the cytoplasm. The catalysed reaction is pseudouridine(1915) in 23S rRNA + S-adenosyl-L-methionine = N(3)-methylpseudouridine(1915) in 23S rRNA + S-adenosyl-L-homocysteine + H(+). Its function is as follows. Specifically methylates the pseudouridine at position 1915 (m3Psi1915) in 23S rRNA. This is Ribosomal RNA large subunit methyltransferase H from Aliivibrio fischeri (strain ATCC 700601 / ES114) (Vibrio fischeri).